The following is a 1984-amino-acid chain: Sodium channel protein type 9 subunit alpha (1984 aa).

The Cytoplasmic segment spans residues methionine 1–histidine 125. The segment covering arginine 26–lysine 39 has biased composition (basic and acidic residues). The disordered stretch occupies residues arginine 26–alanine 55. The stretch at phenylalanine 112–glutamine 410 is one I repeat. A helical membrane pass occupies residues serine 126–methionine 145. Topologically, residues serine 146 to aspartate 150 are extracellular. Residues tryptophan 151–leucine 172 traverse the membrane as a helical segment. Residues alanine 173–arginine 185 lie on the Cytoplasmic side of the membrane. The helical transmembrane segment at aspartate 186–phenylalanine 204 threads the bilayer. Residues valine 205–valine 210 are Extracellular-facing. A helical transmembrane segment spans residues serine 211 to valine 227. Over isoleucine 228–serine 241 the chain is Cytoplasmic. Residues valine 242 to phenylalanine 267 traverse the membrane as a helical segment. The Extracellular segment spans residues methionine 268–threonine 346. Cysteine 275 and cysteine 324 are oxidised to a cystine. The segment at residues phenylalanine 347–tryptophan 363 is an intramembrane region (pore-forming). The Extracellular segment spans residues glutamate 364–lysine 376. Residues threonine 377–alanine 402 traverse the membrane as a helical segment. Residues alanine 402–serine 449 are a coiled coil. Residues methionine 403 to phenylalanine 744 lie on the Cytoplasmic side of the membrane. The span at leucine 458–lysine 471 shows a compositional bias: low complexity. Disordered regions lie at residues leucine 458–glycine 540 and histidine 574–proline 609. A compositionally biased stretch (basic residues) spans lysine 474 to lysine 486. 2 stretches are compositionally biased toward basic and acidic residues: residues serine 489 to arginine 509 and histidine 574 to arginine 584. Residues leucine 684–lysine 708 are a coiled coil. An II repeat occupies cysteine 725 to glutamine 988. A helical transmembrane segment spans residues valine 745 to alanine 761. The Extracellular portion of the chain corresponds to methionine 762 to glutamate 770. The helical transmembrane segment at phenylalanine 771–isoleucine 795 threads the bilayer. At alanine 796 to glutamine 804 the chain is on the cytoplasmic side. The chain crosses the membrane as a helical span at residues valine 805–glutamate 821. Residues leucine 822–leucine 830 lie on the Extracellular side of the membrane. The chain crosses the membrane as a helical span at residues serine 831–serine 847. Over tryptophan 848–alanine 864 the chain is Cytoplasmic. Residues leucine 865 to phenylalanine 887 traverse the membrane as a helical segment. At glycine 888–histidine 914 the chain is on the extracellular side. A disulfide bridge connects residues cysteine 896 and cysteine 902. Positions serine 915–tryptophan 927 form an intramembrane region, pore-forming. Topologically, residues isoleucine 928–glycine 939 are extracellular. Cysteine 934 and cysteine 943 form a disulfide bridge. The helical transmembrane segment at glutamine 940 to leucine 966 threads the bilayer. Topologically, residues leucine 967–arginine 1185 are cytoplasmic. 2 disordered regions span residues lysine 1015–asparagine 1039 and proline 1089–asparagine 1145. A compositionally biased stretch (basic and acidic residues) spans glycine 1019–asparagine 1035. Positions glycine 1135–asparagine 1145 are enriched in acidic residues. The stretch at threonine 1178–leucine 1486 is one III repeat. The chain crosses the membrane as a helical span at residues isoleucine 1186–glutamate 1210. Over aspartate 1211 to isoleucine 1222 the chain is Extracellular. The helical transmembrane segment at isoleucine 1223 to tyrosine 1248 threads the bilayer. The Cytoplasmic portion of the chain corresponds to lysine 1249–threonine 1250. A helical transmembrane segment spans residues tyrosine 1251–leucine 1276. At glycine 1277–lysine 1285 the chain is on the extracellular side. The helical transmembrane segment at serine 1286 to phenylalanine 1302 threads the bilayer. At glutamate 1303–alanine 1315 the chain is on the cytoplasmic side. A helical membrane pass occupies residues isoleucine 1316–leucine 1340. The Extracellular portion of the chain corresponds to phenylalanine 1341–leucine 1392. Cysteine 1348 and cysteine 1368 form a disulfide bridge. Residues glycine 1393–phenylalanine 1403 constitute an intramembrane region (pore-forming). At lysine 1404–leucine 1429 the chain is on the extracellular side. The helical transmembrane segment at tyrosine 1430–isoleucine 1455 threads the bilayer. At aspartate 1456–asparagine 1512 the chain is on the cytoplasmic side. Phosphoserine; by PKC is present on serine 1488. Residues isoleucine 1495–glutamine 1793 form an IV repeat. Residues glutamine 1513 to valine 1532 form a helical membrane-spanning segment. Residues glutamate 1533–phenylalanine 1543 are Extracellular-facing. A helical membrane pass occupies residues valine 1544 to isoleucine 1565. The Cytoplasmic portion of the chain corresponds to serine 1566–valine 1574. The helical transmembrane segment at glycine 1575–methionine 1596 threads the bilayer. The Extracellular segment spans residues isoleucine 1597–threonine 1605. A helical membrane pass occupies residues leucine 1606–alanine 1625. Residues lysine 1626 to serine 1638 lie on the Cytoplasmic side of the membrane. Residues leucine 1639–methionine 1661 form a helical membrane-spanning segment. Residues serine 1662 to asparagine 1684 lie on the Extracellular side of the membrane. The pore-forming intramembrane region spans serine 1685 to glycine 1697. Over tryptophan 1698–proline 1731 the chain is Extracellular. Cysteines 1713 and 1728 form a disulfide. The helical transmembrane segment at serine 1732–isoleucine 1757 threads the bilayer. The Cytoplasmic segment spans residues leucine 1758–lysine 1984. The IQ domain occupies glutamate 1887–lysine 1916. The disordered stretch occupies residues aspartate 1933–lysine 1984. The segment covering alanine 1946–serine 1958 has biased composition (polar residues). Over residues threonine 1960–lysine 1984 the composition is skewed to basic and acidic residues.

It belongs to the sodium channel (TC 1.A.1.10) family. Nav1.7/SCN9A subfamily. In terms of assembly, the Nav1.7 voltage-gated sodium channel consists of an ion-conducting alpha subunit SCN9A which is functional on its own regulated by one or more beta-1 (SCN1B), beta-2 (SCN2B), beta-3 (SCN3B) and beta-4 (SCN4B) subunits. SCN1B and SCN3B are non-covalently associated with SCN9A. SCN2B and SCN4B are disulfide-linked to SCN9A. SCN1B regulates channel inactivation. Interacts with NEDD4 and NEDD4L; regulates Nav1.7 activity most probably through ubiquitination and subsequent endocytosis. Interacts with TMEM233; modulates the gating properties of NaV1.7. In terms of processing, ubiquitinated by NEDD4L; which may promote its endocytosis. Phosphorylation at Ser-1488 by PKC in a highly conserved cytoplasmic loop increases peak sodium currents. In terms of tissue distribution, expressed strongly in sciatic nerves, with moderate levels in kidney. Not detected in liver, brain and muscle.

Its subcellular location is the cell membrane. The protein resides in the cell projection. The protein localises to the neuron projection. It is found in the axon. It catalyses the reaction Na(+)(in) = Na(+)(out). Functionally, pore-forming subunit of Nav1.7, a voltage-gated sodium (Nav) channel that directly mediates the depolarizing phase of action potentials in excitable membranes. Navs, also called VGSCs (voltage-gated sodium channels) or VDSCs (voltage-dependent sodium channels), operate by switching between closed and open conformations depending on the voltage difference across the membrane. In the open conformation they allow Na(+) ions to selectively pass through the pore, along their electrochemical gradient. The influx of Na(+) ions provokes membrane depolarization, initiating the propagation of electrical signals throughout cells and tissues. Nav1.7 plays a crucial role in controlling the excitability and action potential propagation from nociceptor neurons, thereby contributing to the sensory perception of pain. This chain is Sodium channel protein type 9 subunit alpha, found in Mus musculus (Mouse).